The following is a 149-amino-acid chain: Large ribosomal subunit protein bL9 (149 aa).

It belongs to the bacterial ribosomal protein bL9 family.

In terms of biological role, binds to the 23S rRNA. The protein is Large ribosomal subunit protein bL9 of Shewanella amazonensis (strain ATCC BAA-1098 / SB2B).